The sequence spans 271 residues: Mannosyl-3-phosphoglycerate phosphatase (271 aa).

D13 acts as the Nucleophile in catalysis. The Mg(2+) site is built by D13, D15, and D214.

Belongs to the HAD-like hydrolase superfamily. MPGP family. The cofactor is Mg(2+).

It is found in the cytoplasm. The catalysed reaction is 2-O-(alpha-D-mannosyl)-3-phosphoglycerate + H2O = (2R)-2-O-(alpha-D-mannosyl)-glycerate + phosphate. The polypeptide is Mannosyl-3-phosphoglycerate phosphatase (Escherichia coli (strain SMS-3-5 / SECEC)).